A 674-amino-acid chain; its full sequence is DNA ligase (674 aa).

NAD(+)-binding positions include D34–D38, S83–L84, and E117. Residue K119 is the N6-AMP-lysine intermediate of the active site. NAD(+)-binding residues include R140, E184, K297, and K321. 4 residues coordinate Zn(2+): C415, C418, C433, and C439. The region spanning L598–L674 is the BRCT domain.

Belongs to the NAD-dependent DNA ligase family. LigA subfamily. It depends on Mg(2+) as a cofactor. Mn(2+) serves as cofactor.

It carries out the reaction NAD(+) + (deoxyribonucleotide)n-3'-hydroxyl + 5'-phospho-(deoxyribonucleotide)m = (deoxyribonucleotide)n+m + AMP + beta-nicotinamide D-nucleotide.. Its function is as follows. DNA ligase that catalyzes the formation of phosphodiester linkages between 5'-phosphoryl and 3'-hydroxyl groups in double-stranded DNA using NAD as a coenzyme and as the energy source for the reaction. It is essential for DNA replication and repair of damaged DNA. The sequence is that of DNA ligase from Chlorobaculum tepidum (strain ATCC 49652 / DSM 12025 / NBRC 103806 / TLS) (Chlorobium tepidum).